Reading from the N-terminus, the 158-residue chain is MPVFTHLNENNEVHMVDVTPKPDVSREATAKGRIYLRPETLAAIAEGRVLKGNVLATAQVAGTLAVKQTWALIPMCHPLPVGGVTIWFEQTDEYIEAFCRVKTYGKTGIEMEALTGVSLSLLTIWDMVKSAEKDEAGQYPVTRIDGISVIEKIKGTPE.

Residues 75–77 and 111–112 each bind substrate; these read MCH and ME. Aspartate 126 is an active-site residue.

It belongs to the MoaC family. Homohexamer; trimer of dimers.

It catalyses the reaction (8S)-3',8-cyclo-7,8-dihydroguanosine 5'-triphosphate = cyclic pyranopterin phosphate + diphosphate. Its pathway is cofactor biosynthesis; molybdopterin biosynthesis. In terms of biological role, catalyzes the conversion of (8S)-3',8-cyclo-7,8-dihydroguanosine 5'-triphosphate to cyclic pyranopterin monophosphate (cPMP). This chain is Probable cyclic pyranopterin monophosphate synthase, found in Methanocorpusculum labreanum (strain ATCC 43576 / DSM 4855 / Z).